Here is a 375-residue protein sequence, read N- to C-terminus: Succinyl-diaminopimelate desuccinylase (375 aa).

His-66 is a binding site for Zn(2+). The active site involves Asp-68. Asp-99 lines the Zn(2+) pocket. Glu-133 (proton acceptor) is an active-site residue. Residues Glu-134, Glu-162, and His-348 each coordinate Zn(2+).

This sequence belongs to the peptidase M20A family. DapE subfamily. As to quaternary structure, homodimer. It depends on Zn(2+) as a cofactor. The cofactor is Co(2+).

The catalysed reaction is N-succinyl-(2S,6S)-2,6-diaminopimelate + H2O = (2S,6S)-2,6-diaminopimelate + succinate. It functions in the pathway amino-acid biosynthesis; L-lysine biosynthesis via DAP pathway; LL-2,6-diaminopimelate from (S)-tetrahydrodipicolinate (succinylase route): step 3/3. Its function is as follows. Catalyzes the hydrolysis of N-succinyl-L,L-diaminopimelic acid (SDAP), forming succinate and LL-2,6-diaminopimelate (DAP), an intermediate involved in the bacterial biosynthesis of lysine and meso-diaminopimelic acid, an essential component of bacterial cell walls. The sequence is that of Succinyl-diaminopimelate desuccinylase from Erwinia tasmaniensis (strain DSM 17950 / CFBP 7177 / CIP 109463 / NCPPB 4357 / Et1/99).